Reading from the N-terminus, the 131-residue chain is ATP synthase lipid-binding protein, mitochondrial (131 aa).

The transit peptide at 1–56 (MLSAARLIAPAARSAIFSNAAVVRPLAAVSTQTQLVPAAPAQLSAVRSFQTTSVTK) directs the protein to the mitochondrion. A helical transmembrane segment spans residues 72 to 92 (VGVAGSGAGIGTVFGSLIIGY). N6,N6,N6-trimethyllysine is present on Lys-99. Residues 107-127 (ILGFALSEAMGLFCLMMAFLL) traverse the membrane as a helical segment.

It belongs to the ATPase C chain family. As to quaternary structure, F-type ATPases have 2 components, CF(1) - the catalytic core - and CF(0) - the membrane proton channel. CF(1) has five subunits: alpha(3), beta(3), gamma(1), delta(1), epsilon(1). CF(0) has three main subunits: a, b and c. In terms of processing, trimethylated by ATPSCKMT at Lys-99. Methylation may be required for proper incorporation of the C subunit into the ATP synthase complex and mitochondrial respiration.

It localises to the mitochondrion membrane. Its function is as follows. Mitochondrial membrane ATP synthase (F(1)F(0) ATP synthase or Complex V) produces ATP from ADP in the presence of a proton gradient across the membrane which is generated by electron transport complexes of the respiratory chain. F-type ATPases consist of two structural domains, F(1) - containing the extramembraneous catalytic core and F(0) - containing the membrane proton channel, linked together by a central stalk and a peripheral stalk. During catalysis, ATP synthesis in the catalytic domain of F(1) is coupled via a rotary mechanism of the central stalk subunits to proton translocation. Part of the complex F(0) domain. A homomeric c-ring of probably 10 subunits is part of the complex rotary element. This chain is ATP synthase lipid-binding protein, mitochondrial, found in Manduca sexta (Tobacco hawkmoth).